We begin with the raw amino-acid sequence, 374 residues long: Ribosomal RNA large subunit methyltransferase G (374 aa).

The protein belongs to the methyltransferase superfamily. RlmG family.

Its subcellular location is the cytoplasm. The catalysed reaction is guanosine(1835) in 23S rRNA + S-adenosyl-L-methionine = N(2)-methylguanosine(1835) in 23S rRNA + S-adenosyl-L-homocysteine + H(+). Its function is as follows. Specifically methylates the guanine in position 1835 (m2G1835) of 23S rRNA. This chain is Ribosomal RNA large subunit methyltransferase G, found in Pseudomonas aeruginosa (strain UCBPP-PA14).